The sequence spans 245 residues: Protein ARV 1 (245 aa).

5 helical membrane-spanning segments follow: residues 70–90 (INPA…AYLL), 117–137 (IKVL…FAIA), 163–183 (IFLL…FVDI), 200–220 (TMTR…LVGQ), and 224–244 (PTIF…FFRI).

This sequence belongs to the ARV1 family. As to expression, restricted to tissues in which cells are actively dividing or expanding. Mostly expressed in roots and flowers, and, to a lower extent, in stems and leaves.

Its subcellular location is the endoplasmic reticulum membrane. Its function is as follows. Mediator of sterol homeostasis involved in sterol uptake, trafficking and distribution into membranes. Also regulates the sphingolipid metabolism. The sequence is that of Protein ARV 1 from Arabidopsis thaliana (Mouse-ear cress).